The chain runs to 383 residues: MNSKLVLIVAGEASGDLHGASLVGAMVKREPGIRFYGIGGVNLKTAGVDLWADAADMAVVGLTEVASKLRGILTVMHRLKKSMQLLKPDLVILIDYPDFNLPLARSAKKNGIPVFYYISPQVWAWRKGRLRTISGLVDRMAVILPFEEPLYRQAGVDVSFVGHPLLDVVQATSSRDETLRMFGLREDVTTVALLPGSRKGEVTRLLPVMLKAARILTENICPVQFLLPMANTLDETWMKDQIAKADPPGVRLIRGATYDAVAAADAAVVVSGTATLETALLGTPLIVIYKVSALSYLIGRMLISVDHIGLVNIVAGKTVAPELIQGAANPERIAAEILAILGQPDRRKAIQEELSHLRDKLGLPGAAERAAVMALTLIKKSDC.

Belongs to the LpxB family.

It carries out the reaction a lipid X + a UDP-2-N,3-O-bis[(3R)-3-hydroxyacyl]-alpha-D-glucosamine = a lipid A disaccharide + UDP + H(+). The protein operates within bacterial outer membrane biogenesis; LPS lipid A biosynthesis. Condensation of UDP-2,3-diacylglucosamine and 2,3-diacylglucosamine-1-phosphate to form lipid A disaccharide, a precursor of lipid A, a phosphorylated glycolipid that anchors the lipopolysaccharide to the outer membrane of the cell. This Syntrophus aciditrophicus (strain SB) protein is Lipid-A-disaccharide synthase.